The following is a 351-amino-acid chain: MTDSADTPQVELSEQGLNAAADAAEKAFAEAANLEELAAARREHLGDDAPIPAARRSLGSLPKDQRKDAGRLVNMARGRVEKRFAQVKAELERKRNEEVLRAERIDVTEPTTRGQRGAQHPITILSEQIADIFVGMGWEIADGPEVEAEYFNFDSLNFIPDHPARTLQDTFHIAPEGSGQVLRTHTSPVQMRTMLSRDLPIYIACPGRVFRTDELDATHTPVFHQVEGLAVDKGLTMAHLKGTLDHLAKTLFGEEAKTRIRPNYFPFTEPSAEVDVWFADKKGGAGWIEWGGCGMVNPNVLIAAGVDPEEYSGFAFGMGIERTLQFRNGLPDMRDMVEGDVRFTLPFGVRR.

Residues 45 to 69 (LGDDAPIPAARRSLGSLPKDQRKDA) are disordered. Residue E269 participates in Mg(2+) binding.

Belongs to the class-II aminoacyl-tRNA synthetase family. Phe-tRNA synthetase alpha subunit type 1 subfamily. In terms of assembly, tetramer of two alpha and two beta subunits. Mg(2+) serves as cofactor.

It is found in the cytoplasm. The enzyme catalyses tRNA(Phe) + L-phenylalanine + ATP = L-phenylalanyl-tRNA(Phe) + AMP + diphosphate + H(+). The chain is Phenylalanine--tRNA ligase alpha subunit from Corynebacterium jeikeium (strain K411).